Consider the following 165-residue polypeptide: RxLR effector protein PITG_09218 (165 aa).

The signal sequence occupies residues 1–24 (MRFSAFLTLLLVAFVASCSTFASA). The RxLR-dEER signature appears at 31-57 (RRLRADAAPVPVNKDNVAKLAGGFLEK). A helical transmembrane segment spans residues 129–149 (VTLGATVAGFAIYGAYKALFD).

This sequence belongs to the RxLR effector family.

The protein resides in the secreted. Its subcellular location is the host mitochondrion membrane. It is found in the host endoplasmic reticulum membrane. Its function is as follows. Effector that enhances P.infestans colonization of Nicotiana benthamiana leaves. The sequence is that of RxLR effector protein PITG_09218 from Phytophthora infestans (strain T30-4) (Potato late blight agent).